The following is a 1036-amino-acid chain: Serine/threonine-protein kinase ULK2 (1036 aa).

In terms of domain architecture, Protein kinase spans 9 to 271 (YSKRDLVGHG…FEAFFSHPFL (263 aa)). Residues 15–23 (VGHGAFAVV) and K39 contribute to the ATP site. Residue D131 is the Proton acceptor of the active site. Disordered regions lie at residues 319-348 (ENLSSPPLGPPNYLQVSKDSASTSSKNSSC), 418-460 (TSTA…ADTA), 491-522 (CCCGHPQGHDSRSRNSSGSPVPQAQSPQSLLS), 540-588 (QKLR…SSDW), and 656-695 (AEQQSKAVFGRSVSTGKLSDQQGKTPICRHQGSTDSLNTE). Low complexity predominate over residues 335-348 (SKDSASTSSKNSSC). Polar residues predominate over residues 418-428 (TSTASSGTNVH). Residue S430 is modified to Phosphoserine. Polar residues predominate over residues 504 to 521 (RNSSGSPVPQAQSPQSLL). Residues 659–679 (QSKAVFGRSVSTGKLSDQQGK) are compositionally biased toward polar residues. Phosphoserine occurs at positions 771 and 780. The interval 812 to 1036 (ELPEETLMER…SALCHSTATV (225 aa)) is CTD-like region.

This sequence belongs to the protein kinase superfamily. Ser/Thr protein kinase family. APG1/unc-51/ULK1 subfamily. Interacts with SYNGAP1. Component of a complex consisting of ATG13/KIAA0652, ULK1 and RB1CC1/FIP200. Interacts (via C-terminus) with ATG13/KIAA0652. Associates with the mammalian target of rapamycin complex 1 (mTORC1) through an interaction with RPTOR. Post-translationally, autophosphorylated. In response to nutrient limitation, probably phosphorylated and activated by AMPK, leading to activate autophagy.

The protein localises to the cytoplasmic vesicle membrane. The enzyme catalyses L-seryl-[protein] + ATP = O-phospho-L-seryl-[protein] + ADP + H(+). It catalyses the reaction L-threonyl-[protein] + ATP = O-phospho-L-threonyl-[protein] + ADP + H(+). Its function is as follows. Serine/threonine-protein kinase involved in autophagy in response to starvation. Acts upstream of phosphatidylinositol 3-kinase PIK3C3 to regulate the formation of autophagophores, the precursors of autophagosomes. Part of regulatory feedback loops in autophagy: acts both as a downstream effector and a negative regulator of mammalian target of rapamycin complex 1 (mTORC1) via interaction with RPTOR. Activated via phosphorylation by AMPK, also acts as a negative regulator of AMPK through phosphorylation of the AMPK subunits PRKAA1, PRKAB2 and PRKAG1. May phosphorylate ATG13/KIAA0652, FRS2, FRS3 and RPTOR; however such data need additional evidences. Not involved in ammonia-induced autophagy or in autophagic response of cerebellar granule neurons (CGN) to low potassium concentration. Plays a role early in neuronal differentiation and is required for granule cell axon formation: may govern axon formation via Ras-like GTPase signaling and through regulation of the Rab5-mediated endocytic pathways within developing axons. The sequence is that of Serine/threonine-protein kinase ULK2 (ULK2) from Homo sapiens (Human).